Here is a 147-residue protein sequence, read N- to C-terminus: Protein SprT-like (147 aa).

The 134-residue stretch at 9–142 (AKVKEISLTY…CGKCRGKLIL (134 aa)) folds into the SprT-like domain. His65 is a binding site for Zn(2+). The active site involves Glu66. His69 contacts Zn(2+).

This sequence belongs to the SprT family. Zn(2+) serves as cofactor.

It is found in the cytoplasm. The sequence is that of Protein SprT-like (yciD) from Lactococcus lactis subsp. lactis (strain IL1403) (Streptococcus lactis).